The following is a 191-amino-acid chain: UPF0149 protein plu3602 (191 aa).

It belongs to the UPF0149 family.

This is UPF0149 protein plu3602 from Photorhabdus laumondii subsp. laumondii (strain DSM 15139 / CIP 105565 / TT01) (Photorhabdus luminescens subsp. laumondii).